Here is a 200-residue protein sequence, read N- to C-terminus: Cytochrome c biogenesis ATP-binding export protein CcmA (200 aa).

The ABC transporter domain occupies 2-200 (LDVIELDFDY…NKADYEEYHL (199 aa)). 34–41 (GSNGAGKT) is a binding site for ATP.

This sequence belongs to the ABC transporter superfamily. CcmA exporter (TC 3.A.1.107) family. In terms of assembly, the complex is composed of two ATP-binding proteins (CcmA) and two transmembrane proteins (CcmB).

It is found in the cell inner membrane. It catalyses the reaction heme b(in) + ATP + H2O = heme b(out) + ADP + phosphate + H(+). Functionally, part of the ABC transporter complex CcmAB involved in the biogenesis of c-type cytochromes; once thought to export heme, this seems not to be the case, but its exact role is uncertain. Responsible for energy coupling to the transport system. The sequence is that of Cytochrome c biogenesis ATP-binding export protein CcmA from Legionella pneumophila.